An 83-amino-acid chain; its full sequence is Exodeoxyribonuclease 7 small subunit (83 aa).

This sequence belongs to the XseB family. As to quaternary structure, heterooligomer composed of large and small subunits.

The protein resides in the cytoplasm. It carries out the reaction Exonucleolytic cleavage in either 5'- to 3'- or 3'- to 5'-direction to yield nucleoside 5'-phosphates.. Functionally, bidirectionally degrades single-stranded DNA into large acid-insoluble oligonucleotides, which are then degraded further into small acid-soluble oligonucleotides. The sequence is that of Exodeoxyribonuclease 7 small subunit from Novosphingobium aromaticivorans (strain ATCC 700278 / DSM 12444 / CCUG 56034 / CIP 105152 / NBRC 16084 / F199).